We begin with the raw amino-acid sequence, 260 residues long: HLA class II histocompatibility antigen, DP alpha 1 chain (260 aa).

An N-terminal signal peptide occupies residues 1–28 (MRPEDRMFHIRAVILRALSLAFLLSLRG). Residues 29–115 (AGAIKADHVS…QRSNHTQATN (87 aa)) form an alpha-1 region. At 29-222 (AGAIKADHVS…EPIQMPETTE (194 aa)) the chain is on the extracellular side. N-linked (GlcNAc...) asparagine glycosylation is found at N109 and N149. The tract at residues 116–209 (DPPEVTVFPK…GLDQPLLKHW (94 aa)) is alpha-2. The Ig-like C1-type domain maps to 118-210 (PEVTVFPKEP…LDQPLLKHWE (93 aa)). C138 and C194 are joined by a disulfide. Residues 210 to 222 (EAQEPIQMPETTE) form a connecting peptide region. The chain crosses the membrane as a helical span at residues 223–245 (TVLCALGLVLGLVGIIVGTVLII). At 246–260 (KSLRSGHDPRAQGTL) the chain is on the cytoplasmic side.

The protein belongs to the MHC class II family. Heterodimer of an alpha and a beta subunit; also referred as MHC class II molecule. In the endoplasmic reticulum (ER) it forms a heterononamer; 3 MHC class II molecules bind to a CD74 homotrimer (also known as invariant chain or HLA class II histocompatibility antigen gamma chain). In the endosomal/lysosomal system; CD74 undergoes sequential degradation by various proteases; leaving a small fragment termed CLIP on each MHC class II molecule. MHC class II molecule interacts with HLA_DM, and HLA_DO in B-cells, in order to release CLIP and facilitate the binding of antigenic peptides.

Its subcellular location is the cell membrane. The protein localises to the endoplasmic reticulum membrane. The protein resides in the golgi apparatus. It is found in the trans-Golgi network membrane. It localises to the endosome membrane. Its subcellular location is the lysosome membrane. Functionally, binds peptides derived from antigens that access the endocytic route of antigen presenting cells (APC) and presents them on the cell surface for recognition by the CD4 T-cells. The peptide binding cleft accommodates peptides of 10-30 residues. The peptides presented by MHC class II molecules are generated mostly by degradation of proteins that access the endocytic route, where they are processed by lysosomal proteases and other hydrolases. Exogenous antigens that have been endocytosed by the APC are thus readily available for presentation via MHC II molecules, and for this reason this antigen presentation pathway is usually referred to as exogenous. As membrane proteins on their way to degradation in lysosomes as part of their normal turn-over are also contained in the endosomal/lysosomal compartments, exogenous antigens must compete with those derived from endogenous components. Autophagy is also a source of endogenous peptides, autophagosomes constitutively fuse with MHC class II loading compartments. In addition to APCs, other cells of the gastrointestinal tract, such as epithelial cells, express MHC class II molecules and CD74 and act as APCs, which is an unusual trait of the GI tract. To produce a MHC class II molecule that presents an antigen, three MHC class II molecules (heterodimers of an alpha and a beta chain) associate with a CD74 trimer in the ER to form a heterononamer. Soon after the entry of this complex into the endosomal/lysosomal system where antigen processing occurs, CD74 undergoes a sequential degradation by various proteases, including CTSS and CTSL, leaving a small fragment termed CLIP (class-II-associated invariant chain peptide). The removal of CLIP is facilitated by HLA-DM via direct binding to the alpha-beta-CLIP complex so that CLIP is released. HLA-DM stabilizes MHC class II molecules until primary high affinity antigenic peptides are bound. The MHC II molecule bound to a peptide is then transported to the cell membrane surface. In B-cells, the interaction between HLA-DM and MHC class II molecules is regulated by HLA-DO. Primary dendritic cells (DCs) also to express HLA-DO. Lysosomal microenvironment has been implicated in the regulation of antigen loading into MHC II molecules, increased acidification produces increased proteolysis and efficient peptide loading. The polypeptide is HLA class II histocompatibility antigen, DP alpha 1 chain (HLA-DPA1) (Homo sapiens (Human)).